Here is a 149-residue protein sequence, read N- to C-terminus: Protein SprT-like (149 aa).

One can recognise a SprT-like domain in the interval 4 to 144 (TDYVKQVSLE…GLCRGKLLLV (141 aa)). Histidine 64 lines the Zn(2+) pocket. Glutamate 65 is a catalytic residue. Zn(2+) is bound at residue histidine 68.

The protein belongs to the SprT family. It depends on Zn(2+) as a cofactor.

It localises to the cytoplasm. The polypeptide is Protein SprT-like (Streptococcus pneumoniae serotype 4 (strain ATCC BAA-334 / TIGR4)).